The primary structure comprises 427 residues: Serine--tRNA ligase (427 aa).

231 to 233 contributes to the L-serine binding site; sequence TAE. 262–264 serves as a coordination point for ATP; that stretch reads RSE. Glutamate 285 serves as a coordination point for L-serine. 349–352 provides a ligand contact to ATP; the sequence is EISS. Serine 385 contributes to the L-serine binding site.

Belongs to the class-II aminoacyl-tRNA synthetase family. Type-1 seryl-tRNA synthetase subfamily. In terms of assembly, homodimer. The tRNA molecule binds across the dimer.

The protein resides in the cytoplasm. It catalyses the reaction tRNA(Ser) + L-serine + ATP = L-seryl-tRNA(Ser) + AMP + diphosphate + H(+). It carries out the reaction tRNA(Sec) + L-serine + ATP = L-seryl-tRNA(Sec) + AMP + diphosphate + H(+). It functions in the pathway aminoacyl-tRNA biosynthesis; selenocysteinyl-tRNA(Sec) biosynthesis; L-seryl-tRNA(Sec) from L-serine and tRNA(Sec): step 1/1. In terms of biological role, catalyzes the attachment of serine to tRNA(Ser). Is also able to aminoacylate tRNA(Sec) with serine, to form the misacylated tRNA L-seryl-tRNA(Sec), which will be further converted into selenocysteinyl-tRNA(Sec). The polypeptide is Serine--tRNA ligase (Methylococcus capsulatus (strain ATCC 33009 / NCIMB 11132 / Bath)).